A 752-amino-acid chain; its full sequence is MSWPSLSGVPNGSSSVSTWLSVTHPRRSLPKELLTAFDTCNVAPEALLVLRSTSLMILEETCVVVGAAEMPTAEDNSGRELFIGSNGDPMERKTRTAHHAIKKTVRIKKGHRTTFAMTVANGAYVKFGARPLTEANVLVVRKWIVKLIADEYKDLRVCDQALVIDRATFLSFIPTMAWNNYKFIFHGKNAVTDRVAGENLFSRIAQWANPGKXGCPVVVTGQGCVISRAPDCAQLRVKRLLGVTKNRTCMRVSGVSPNIQIIPFNNDITTLERAIKERVFFVKNLDKGSPTKFVSPPRPAPGVFAQRLSNTLGLLVPFLPSTAPMSHQQFVDSTPSRKRKVYQQALEDISCHGLNLETDSKVKVFVKYEKTDHTSKADPVPRVISPRDPKYNLALGRYLRPMEERIFKALGKLFGHRTVMKGMDTDVTARVIQEKWNMFNKPVAIGLDASRFDQHVSLEALEFEHSVYLKCVRRMVDKRKLGNILRHQLLNKCYGNTPDGAVSYTIEGTRMSGDMNTSLGNCVLMCMMIHAYGLHKSVNIQLANNGDDCVVFLEQSDLATFSEGLFEWFLEMGFNMAIEEPSYELEHIEFCQCRPVFDGVKYTMCRNPRTAIAKDSVYLKHVDQFVTYSSWLNAVGTGGLALAGGLPIFDAFYTCYKRNSNSHWFSGRKGRLKTLSSVDDSLPWFMRELGLKGKRSSAEPLPASRASFYLAWGVTPCEQLELEKYYKSFKLDTSTLLEEHLWQPRGVFPDED.

A RdRp catalytic domain is found at 442 to 561 (PVAIGLDASR…FLEQSDLATF (120 aa)).

Belongs to the tombusviridae RNA polymerase family.

It carries out the reaction RNA(n) + a ribonucleoside 5'-triphosphate = RNA(n+1) + diphosphate. In terms of biological role, RNA-dependent RNA polymerase that plays an essential role in the virus replication. The chain is RNA-directed RNA polymerase from Oat chlorotic stunt virus (isolate United Kingdom) (OCSV).